Here is a 27-residue protein sequence, read N- to C-terminus: Conotoxin flf14b (27 aa).

Disulfide bonds link Cys-6/Cys-26 and Cys-10/Cys-22.

In terms of tissue distribution, expressed by the venom duct.

The protein resides in the secreted. In Conus anabathrum floridanus (Florida cone), this protein is Conotoxin flf14b.